Here is a 281-residue protein sequence, read N- to C-terminus: Nucleotide-binding protein Noc_2797 (281 aa).

Position 8–15 (8–15 (GVSGSGKS)) interacts with ATP. 58–61 (DARN) provides a ligand contact to GTP.

The protein belongs to the RapZ-like family.

Its function is as follows. Displays ATPase and GTPase activities. This chain is Nucleotide-binding protein Noc_2797, found in Nitrosococcus oceani (strain ATCC 19707 / BCRC 17464 / JCM 30415 / NCIMB 11848 / C-107).